The primary structure comprises 602 residues: Pyranose dehydrogenase 1 (602 aa).

Residues 1–25 form the signal peptide; that stretch reads MLPRVTKLNSRLLSLALLGIQIARG. An N-linked (GlcNAc...) asparagine glycan is attached at N100. Tele-8alpha-FAD histidine is present on H128. Residues N200, N277, and N344 are each glycosylated (N-linked (GlcNAc...) asparagine). The Proton acceptor role is filled by H537. H581 is an active-site residue.

This sequence belongs to the GMC oxidoreductase family. Monomer. Requires FAD as cofactor. Post-translationally, N-glycosylated.

It is found in the secreted. It catalyses the reaction pyranose + acceptor = pyranos-2-ulose + reduced acceptor.. It carries out the reaction pyranose + acceptor = pyranos-3-ulose + reduced acceptor.. The enzyme catalyses pyranose + acceptor = pyranos-2,3-diulose + reduced acceptor.. The catalysed reaction is a pyranoside + acceptor = a pyranosid-3-ulose + reduced acceptor.. It catalyses the reaction a pyranoside + acceptor = a pyranosid-3,4-diulose + reduced acceptor.. Its function is as follows. Catalyzes the single-oxidation or sequential double oxidation reaction of carbohydrates primarily at carbon-2 and/or carbon-3 with the concomitant reduction of the flavin. The enzyme exhibits a broad sugar substrate specificity, oxidizing different aldopyranoses to the corresponding C-1, C-2, C-3 or C-1,2, C-2,3 and C-3,4 (di)dehydro sugars with substrate-specific regioselectivity. Accepts only a narrow range of electron acceptors such as substituted benzoquinones and complexed metal ions and reacts extremely slowly with O(2) as acceptor. May play a role in the natural recycling of plant matter by oxidizing all major monosaccharides in lignocellulose and by reducing quinone compounds or reactive radical species generated during lignin depolymerization. In Leucoagaricus meleagris (Western flat-topped agaric), this protein is Pyranose dehydrogenase 1.